We begin with the raw amino-acid sequence, 144 residues long: UPF0547 protein C16orf87 homolog (144 aa).

The segment at 33-112 (HAKQSQRLPP…EEKEKQEKEV (80 aa)) is disordered. Over residues 35–45 (KQSQRLPPTSE) the composition is skewed to polar residues. Residues 50-62 (PKRRRTERIKRER) are compositionally biased toward basic residues. 2 stretches are compositionally biased toward basic and acidic residues: residues 63–74 (IHTAVNRDLENR) and 99–112 (KKHEEEKEKQEKEV). Positions 94-122 (KTATTKKHEEEKEKQEKEVDMYANLSDEK) form a coiled coil.

The protein belongs to the UPF0547 family.

The chain is UPF0547 protein C16orf87 homolog from Xenopus laevis (African clawed frog).